The chain runs to 242 residues: Myogenic factor 6 (242 aa).

A disordered region spans residues serine 31–leucine 63. Polar residues predominate over residues glycine 39 to serine 56. The region spanning aspartate 93–leucine 144 is the bHLH domain.

In terms of assembly, efficient DNA binding requires dimerization with another bHLH protein. Interacts with CSRP3. Skeletal muscle.

The protein localises to the nucleus. Functionally, involved in muscle differentiation (myogenic factor). Induces fibroblasts to differentiate into myoblasts. Probable sequence specific DNA-binding protein. The polypeptide is Myogenic factor 6 (Myf6) (Mus musculus (Mouse)).